We begin with the raw amino-acid sequence, 97 residues long: MTNSHGEKRCTRYKLQKTVRERGISPVSKAIQEFEEGQMVHIDIDPSIQKGMPNPKFQGSTGKIVGQRGRSYILEVRSGNAMKEVISLPQHLKPQKY.

The protein belongs to the eukaryotic ribosomal protein eL21 family.

The sequence is that of Large ribosomal subunit protein eL21 from Methanosarcina barkeri (strain Fusaro / DSM 804).